We begin with the raw amino-acid sequence, 408 residues long: uncharacterized protein (408 aa).

The tract at residues 49-77 (PRSSPEVQRKATAGENSEVGSPESSLSTS) is disordered. Polar residues predominate over residues 62–77 (GENSEVGSPESSLSTS). Residues 124 to 170 (SFEFMQLPDTDICQIMSFLDAQSLLNLSQTCSHLRQLCLAHEDNAGK) enclose the F-box domain.

This is an uncharacterized protein from Caenorhabditis elegans.